A 520-amino-acid chain; its full sequence is MKFSRFKSRNTNYYTNTIITTETQLNNSNNNNFNNTTTINHFNKIHQQQSNNNNNNNNNNNNNNNNNNFINFSNHTNNINNNIDNRSDKKRKLNCMEKSNISSSSPYTLTSTPSSSSSSSSCESSLLNLNNEKLIEDKIISFSNENVGNIKIISMSDSKFTIYNSNNTDYKELLFWKVWRNFFLKNEILFHQRLYNLYSSFEFNDLKSLLNFQYREYLQHITFSFYFDEPLSLINFKNNNNYNNNNIFPNSVKKITFGYSFNQAINQNSFSPNSSSLTSLEFGESFNQDIQINSLPPSLTCLKFGKNFNCPLSLGVLPLSGNLKSISFGLSYNQPIQYIPNGVEKLKIGGNSVYNNKNNNVNNKNNNKINKYPNSIKIFKFDKYFNDEIMVGTIPNSVLKVKFGVQFNREISMEQIPCSVTEIDFGLKWNQPLNEFSLPKNGNLKSIIFSHFFNQQINANCLPDGLTHLKFGPLYSKEINLNHLPSSIEILMFHNSFQSLNLLKNYNNLNNKKIQIIYYN.

Disordered stretches follow at residues 47–86 and 100–121; these read QQQS…IDNR and NISS…SSSS. Low complexity predominate over residues 51–84; it reads NNNNNNNNNNNNNNNNNNFINFSNHTNNINNNID. FNIP repeat units follow at residues 242 to 285, 286 to 331, 332 to 406, and 453 to 496; these read YNNN…FGES, FNQD…FGLS, YNQP…FGVQ, and FNQQ…FHNS.

In Dictyostelium discoideum (Social amoeba), this protein is FNIP repeat-containing protein DDB_G0274063/DDB_G0272642.